The primary structure comprises 151 residues: Ubiquitin-conjugating enzyme E2 2 (151 aa).

Residues 4 to 150 form the UBC core domain; sequence AARRRLMRDF…VRETVERSWE (147 aa). The active-site Glycyl thioester intermediate is the C88.

This sequence belongs to the ubiquitin-conjugating enzyme family.

The protein localises to the cytoplasm. It localises to the nucleus. It catalyses the reaction S-ubiquitinyl-[E1 ubiquitin-activating enzyme]-L-cysteine + [E2 ubiquitin-conjugating enzyme]-L-cysteine = [E1 ubiquitin-activating enzyme]-L-cysteine + S-ubiquitinyl-[E2 ubiquitin-conjugating enzyme]-L-cysteine.. It participates in protein modification; protein ubiquitination. Its function is as follows. Catalyzes the covalent attachment of ubiquitin to other proteins. Plays a role in transcription regulation by catalyzing the monoubiquitination of histone H2B to form H2BK123ub1. H2BK123ub1 gives a specific tag for epigenetic transcriptional activation and is also a prerequisite for H3K4me and H3K79me formation. Also involved in postreplication repair of UV-damaged DNA, in N-end rule-dependent protein degradation and in sporulation. This is Ubiquitin-conjugating enzyme E2 2 (UBC2) from Trichoderma harzianum (Hypocrea lixii).